The following is a 118-amino-acid chain: GRB2-related adapter protein-like (118 aa).

The 58-residue stretch at Met-1–His-58 folds into the SH3 domain. The 59-residue stretch at Trp-60–Gly-118 folds into the SH2 domain. Positions Glu-89–Gly-118 are disordered. A compositionally biased stretch (polar residues) spans Ser-90 to Ala-103.

It belongs to the GRB2/sem-5/DRK family.

This Homo sapiens (Human) protein is GRB2-related adapter protein-like (GRAPL).